Consider the following 204-residue polypeptide: ATP phosphoribosyltransferase (204 aa).

This sequence belongs to the ATP phosphoribosyltransferase family. Short subfamily. Heteromultimer composed of HisG and HisZ subunits.

It is found in the cytoplasm. The enzyme catalyses 1-(5-phospho-beta-D-ribosyl)-ATP + diphosphate = 5-phospho-alpha-D-ribose 1-diphosphate + ATP. The protein operates within amino-acid biosynthesis; L-histidine biosynthesis; L-histidine from 5-phospho-alpha-D-ribose 1-diphosphate: step 1/9. Catalyzes the condensation of ATP and 5-phosphoribose 1-diphosphate to form N'-(5'-phosphoribosyl)-ATP (PR-ATP). Has a crucial role in the pathway because the rate of histidine biosynthesis seems to be controlled primarily by regulation of HisG enzymatic activity. The sequence is that of ATP phosphoribosyltransferase from Staphylococcus epidermidis (strain ATCC 35984 / DSM 28319 / BCRC 17069 / CCUG 31568 / BM 3577 / RP62A).